Here is a 184-residue protein sequence, read N- to C-terminus: Putative manganese efflux pump MntP (184 aa).

6 consecutive transmembrane segments (helical) span residues 3 to 23, 36 to 56, 65 to 85, 103 to 123, 126 to 146, and 163 to 183; these read LLSM…ISVS, ALIS…LGWV, VSAL…LKMI, LLVL…SFAL, ISIW…SLAG, and ALGG…NVSF.

Belongs to the MntP (TC 9.B.29) family.

It is found in the cell membrane. Its function is as follows. Probably functions as a manganese efflux pump. This Methanothermobacter thermautotrophicus (strain ATCC 29096 / DSM 1053 / JCM 10044 / NBRC 100330 / Delta H) (Methanobacterium thermoautotrophicum) protein is Putative manganese efflux pump MntP.